The primary structure comprises 171 residues: Protein GrpE (171 aa).

A disordered region spans residues Met-1–Gly-22.

The protein belongs to the GrpE family. In terms of assembly, homodimer.

Its subcellular location is the cytoplasm. Participates actively in the response to hyperosmotic and heat shock by preventing the aggregation of stress-denatured proteins, in association with DnaK and GrpE. It is the nucleotide exchange factor for DnaK and may function as a thermosensor. Unfolded proteins bind initially to DnaJ; upon interaction with the DnaJ-bound protein, DnaK hydrolyzes its bound ATP, resulting in the formation of a stable complex. GrpE releases ADP from DnaK; ATP binding to DnaK triggers the release of the substrate protein, thus completing the reaction cycle. Several rounds of ATP-dependent interactions between DnaJ, DnaK and GrpE are required for fully efficient folding. In Stenotrophomonas maltophilia (strain R551-3), this protein is Protein GrpE.